Here is a 40-residue protein sequence, read N- to C-terminus: Dolichyl-diphosphooligosaccharide--protein glycosyltransferase subunit 4 (40 aa).

The Lumenal portion of the chain corresponds to 1-7; sequence MITDMQL. A helical transmembrane segment spans residues 8 to 28; sequence AIFSNVLGVFLFLLVVAYHYI. Residues 29 to 40 are Cytoplasmic-facing; the sequence is NANTGKPSAKAK.

Belongs to the OST4 family. As to quaternary structure, component of the oligosaccharyltransferase (OST) complex.

Its subcellular location is the endoplasmic reticulum membrane. Subunit of the oligosaccharyl transferase (OST) complex that catalyzes the initial transfer of a defined glycan (Glc(3)Man(9)GlcNAc(2) in eukaryotes) from the lipid carrier dolichol-pyrophosphate to an asparagine residue within an Asn-X-Ser/Thr consensus motif in nascent polypeptide chains, the first step in protein N-glycosylation. N-glycosylation occurs cotranslationally and the complex associates with the Sec61 complex at the channel-forming translocon complex that mediates protein translocation across the endoplasmic reticulum (ER). All subunits are required for a maximal enzyme activity. This is Dolichyl-diphosphooligosaccharide--protein glycosyltransferase subunit 4 from Drosophila sechellia (Fruit fly).